A 336-amino-acid polypeptide reads, in one-letter code: Glycerol-3-phosphate dehydrogenase [NAD(P)+] (336 aa).

Residues Ser14, Trp15, Arg35, Arg36, and Lys109 each contribute to the NADPH site. Positions 109 and 139 each coordinate sn-glycerol 3-phosphate. Residue Ala143 participates in NADPH binding. 5 residues coordinate sn-glycerol 3-phosphate: Lys194, Asp247, Ser257, Arg258, and Asn259. Lys194 functions as the Proton acceptor in the catalytic mechanism. NADPH is bound at residue Arg258. Glu284 provides a ligand contact to NADPH.

The protein belongs to the NAD-dependent glycerol-3-phosphate dehydrogenase family.

It is found in the cytoplasm. It catalyses the reaction sn-glycerol 3-phosphate + NAD(+) = dihydroxyacetone phosphate + NADH + H(+). It carries out the reaction sn-glycerol 3-phosphate + NADP(+) = dihydroxyacetone phosphate + NADPH + H(+). It functions in the pathway membrane lipid metabolism; glycerophospholipid metabolism. In terms of biological role, catalyzes the reduction of the glycolytic intermediate dihydroxyacetone phosphate (DHAP) to sn-glycerol 3-phosphate (G3P), the key precursor for phospholipid synthesis. This chain is Glycerol-3-phosphate dehydrogenase [NAD(P)+], found in Streptomyces griseus subsp. griseus (strain JCM 4626 / CBS 651.72 / NBRC 13350 / KCC S-0626 / ISP 5235).